Reading from the N-terminus, the 426-residue chain is Histidine--tRNA ligase (426 aa).

The protein belongs to the class-II aminoacyl-tRNA synthetase family. Homodimer.

The protein resides in the cytoplasm. The enzyme catalyses tRNA(His) + L-histidine + ATP = L-histidyl-tRNA(His) + AMP + diphosphate + H(+). This chain is Histidine--tRNA ligase, found in Lactiplantibacillus plantarum (strain ATCC BAA-793 / NCIMB 8826 / WCFS1) (Lactobacillus plantarum).